An 858-amino-acid chain; its full sequence is DNA mismatch repair protein MutS (858 aa).

609-616 serves as a coordination point for ATP; that stretch reads GPNMSGKS.

Belongs to the DNA mismatch repair MutS family.

In terms of biological role, this protein is involved in the repair of mismatches in DNA. It is possible that it carries out the mismatch recognition step. This protein has a weak ATPase activity. The chain is DNA mismatch repair protein MutS from Enterococcus faecalis (strain ATCC 700802 / V583).